Reading from the N-terminus, the 484-residue chain is Putative cysteine ligase BshC (484 aa).

Residues 372-435 are a coiled coil; the sequence is RAFRDRVEGL…AARDEVLARH (64 aa).

It belongs to the BshC family.

This chain is Putative cysteine ligase BshC, found in Thermus thermophilus (strain ATCC 27634 / DSM 579 / HB8).